The sequence spans 444 residues: Homogentisate 1,2-dioxygenase (444 aa).

Histidine 298 (proton acceptor) is an active-site residue. The Fe cation site is built by histidine 341 and glutamate 347. Residues tyrosine 356 and histidine 377 each contribute to the homogentisate site. Histidine 377 provides a ligand contact to Fe cation.

This sequence belongs to the homogentisate dioxygenase family. Hexamer; dimer of trimers. The cofactor is Fe cation.

The catalysed reaction is homogentisate + O2 = 4-maleylacetoacetate + H(+). The protein operates within amino-acid degradation; L-phenylalanine degradation; acetoacetate and fumarate from L-phenylalanine: step 4/6. Its function is as follows. Involved in the catabolism of homogentisate (2,5-dihydroxyphenylacetate or 2,5-OH-PhAc), a central intermediate in the degradation of phenylalanine and tyrosine. Catalyzes the oxidative ring cleavage of the aromatic ring of homogentisate to yield maleylacetoacetate. The protein is Homogentisate 1,2-dioxygenase of Burkholderia orbicola (strain MC0-3).